The sequence spans 852 residues: Bifunctional uridylyltransferase/uridylyl-removing enzyme (852 aa).

The segment at 1–318 is uridylyltransferase; it reads MPANLSSALE…STPLRVTLRI (318 aa). The segment at 319–672 is uridylyl-removing; the sequence is DDDYIQVNNQ…SRILPKSDSF (354 aa). An HD domain is found at 436-558; the sequence is VDDHILTVVR…VQTHERLSAL (123 aa). 2 ACT domains span residues 673 to 757 and 785 to 852; these read QVMV…SRSR and SVEI…EQLS.

Belongs to the GlnD family. It depends on Mg(2+) as a cofactor.

The catalysed reaction is [protein-PII]-L-tyrosine + UTP = [protein-PII]-uridylyl-L-tyrosine + diphosphate. The enzyme catalyses [protein-PII]-uridylyl-L-tyrosine + H2O = [protein-PII]-L-tyrosine + UMP + H(+). Uridylyltransferase (UTase) activity is inhibited by glutamine, while glutamine activates uridylyl-removing (UR) activity. Modifies, by uridylylation and deuridylylation, the PII regulatory proteins (GlnB and homologs), in response to the nitrogen status of the cell that GlnD senses through the glutamine level. Under low glutamine levels, catalyzes the conversion of the PII proteins and UTP to PII-UMP and PPi, while under higher glutamine levels, GlnD hydrolyzes PII-UMP to PII and UMP (deuridylylation). Thus, controls uridylylation state and activity of the PII proteins, and plays an important role in the regulation of nitrogen assimilation and metabolism. In Neisseria meningitidis serogroup B (strain ATCC BAA-335 / MC58), this protein is Bifunctional uridylyltransferase/uridylyl-removing enzyme.